The sequence spans 438 residues: Methylenetetrahydrofolate--tRNA-(uracil-5-)-methyltransferase TrmFO 2 (438 aa).

Residue 9–14 (GAGLAG) participates in FAD binding.

Belongs to the MnmG family. TrmFO subfamily. FAD is required as a cofactor.

The protein resides in the cytoplasm. The catalysed reaction is uridine(54) in tRNA + (6R)-5,10-methylene-5,6,7,8-tetrahydrofolate + NADH + H(+) = 5-methyluridine(54) in tRNA + (6S)-5,6,7,8-tetrahydrofolate + NAD(+). The enzyme catalyses uridine(54) in tRNA + (6R)-5,10-methylene-5,6,7,8-tetrahydrofolate + NADPH + H(+) = 5-methyluridine(54) in tRNA + (6S)-5,6,7,8-tetrahydrofolate + NADP(+). Its function is as follows. Catalyzes the folate-dependent formation of 5-methyl-uridine at position 54 (M-5-U54) in all tRNAs. The chain is Methylenetetrahydrofolate--tRNA-(uracil-5-)-methyltransferase TrmFO 2 from Mycoplasma mycoides subsp. mycoides SC (strain CCUG 32753 / NCTC 10114 / PG1).